The chain runs to 46 residues: Protein PsbN (46 aa).

The helical transmembrane segment at 10 to 30 (IAITILIVLLGLTAFGVYTAF) threads the bilayer.

The protein belongs to the PsbN family.

It is found in the cellular thylakoid membrane. Its function is as follows. May play a role in photosystem I and II biogenesis. This chain is Protein PsbN, found in Prochlorococcus marinus (strain SARG / CCMP1375 / SS120).